Here is a 145-residue protein sequence, read N- to C-terminus: Ubiquitin-conjugating enzyme E2 variant 1C (145 aa).

Residues 12–145 (PRNFRLLEEL…LVQPPEGTFF (134 aa)) enclose the UBC core domain.

It belongs to the ubiquitin-conjugating enzyme family. In terms of assembly, heterodimer with UBC35 or UBC36. Expressed in roots, shoots, leaves, stems and flowers, but not in pollen.

In terms of biological role, has no ubiquitin ligase activity on its own. The heterodimer with UBC catalyzes the synthesis of non-canonical poly-ubiquitin chains that are linked through 'Lys-63'. This type of poly-ubiquitination does not lead to protein degradation by the proteasome. Mediates transcriptional activation of target genes. May play a role in the control of progress through the cell cycle and differentiation. May play a role in the error-free DNA repair pathway and contributes to the survival of cells after DNA damage. The chain is Ubiquitin-conjugating enzyme E2 variant 1C (UEV1C) from Arabidopsis thaliana (Mouse-ear cress).